The sequence spans 211 residues: FMN-dependent NADH:quinone oxidoreductase (211 aa).

FMN is bound by residues 17–19 (SYS) and 102–105 (MWNF).

Belongs to the azoreductase type 1 family. As to quaternary structure, homodimer. FMN serves as cofactor.

The catalysed reaction is 2 a quinone + NADH + H(+) = 2 a 1,4-benzosemiquinone + NAD(+). It catalyses the reaction N,N-dimethyl-1,4-phenylenediamine + anthranilate + 2 NAD(+) = 2-(4-dimethylaminophenyl)diazenylbenzoate + 2 NADH + 2 H(+). In terms of biological role, quinone reductase that provides resistance to thiol-specific stress caused by electrophilic quinones. Its function is as follows. Also exhibits azoreductase activity. Catalyzes the reductive cleavage of the azo bond in aromatic azo compounds to the corresponding amines. This chain is FMN-dependent NADH:quinone oxidoreductase, found in Geobacillus kaustophilus (strain HTA426).